The primary structure comprises 173 residues: Translation initiation factor IF-3 (173 aa).

This sequence belongs to the IF-3 family. In terms of assembly, monomer.

The protein localises to the cytoplasm. Functionally, IF-3 binds to the 30S ribosomal subunit and shifts the equilibrium between 70S ribosomes and their 50S and 30S subunits in favor of the free subunits, thus enhancing the availability of 30S subunits on which protein synthesis initiation begins. This is Translation initiation factor IF-3 from Methylobacterium radiotolerans (strain ATCC 27329 / DSM 1819 / JCM 2831 / NBRC 15690 / NCIMB 10815 / 0-1).